Consider the following 491-residue polypeptide: UDP-N-acetylmuramate--L-alanine ligase (491 aa).

Position 126–132 (G126–T132) interacts with ATP.

The protein belongs to the MurCDEF family.

Its subcellular location is the cytoplasm. The catalysed reaction is UDP-N-acetyl-alpha-D-muramate + L-alanine + ATP = UDP-N-acetyl-alpha-D-muramoyl-L-alanine + ADP + phosphate + H(+). It functions in the pathway cell wall biogenesis; peptidoglycan biosynthesis. In terms of biological role, cell wall formation. This Photorhabdus laumondii subsp. laumondii (strain DSM 15139 / CIP 105565 / TT01) (Photorhabdus luminescens subsp. laumondii) protein is UDP-N-acetylmuramate--L-alanine ligase.